We begin with the raw amino-acid sequence, 223 residues long: Ribosomal RNA small subunit methyltransferase G (223 aa).

Residues Gly-85, Phe-90, and Arg-154 each coordinate S-adenosyl-L-methionine.

This sequence belongs to the methyltransferase superfamily. RNA methyltransferase RsmG family.

The protein localises to the cytoplasm. It carries out the reaction guanosine(527) in 16S rRNA + S-adenosyl-L-methionine = N(7)-methylguanosine(527) in 16S rRNA + S-adenosyl-L-homocysteine. Its function is as follows. Specifically methylates the N7 position of guanine in position 527 of 16S rRNA. This chain is Ribosomal RNA small subunit methyltransferase G, found in Rhodopseudomonas palustris (strain TIE-1).